The primary structure comprises 525 residues: Chromosomal replication initiator protein DnaA (525 aa).

Positions 1–71 are domain I, interacts with DnaA modulators; that stretch reads MNDFWQHCSA…ADLAREFWNT (71 aa). The interval 71–188 is domain II; the sequence is TPIEVQFVLD…GEADSMYERS (118 aa). Residues 160–182 are disordered; the sequence is AAAGRRTWRPGPGAAPANGGEAD. Residues 169 to 181 are compositionally biased toward low complexity; sequence PGPGAAPANGGEA. The tract at residues 189 to 405 is domain III, AAA+ region; the sequence is KLNPVLTFDN…GALRKILAYS (217 aa). Positions 233, 235, 236, and 237 each coordinate ATP. Positions 406–525 are domain IV, binds dsDNA; it reads KFHGREISIE…LHVLEQTLKG (120 aa).

The protein belongs to the DnaA family. As to quaternary structure, oligomerizes as a right-handed, spiral filament on DNA at oriC.

Its subcellular location is the cytoplasm. In terms of biological role, plays an essential role in the initiation and regulation of chromosomal replication. ATP-DnaA binds to the origin of replication (oriC) to initiate formation of the DNA replication initiation complex once per cell cycle. Binds the DnaA box (a 9 base pair repeat at the origin) and separates the double-stranded (ds)DNA. Forms a right-handed helical filament on oriC DNA; dsDNA binds to the exterior of the filament while single-stranded (ss)DNA is stabiized in the filament's interior. The ATP-DnaA-oriC complex binds and stabilizes one strand of the AT-rich DNA unwinding element (DUE), permitting loading of DNA polymerase. After initiation quickly degrades to an ADP-DnaA complex that is not apt for DNA replication. Binds acidic phospholipids. The protein is Chromosomal replication initiator protein DnaA of Burkholderia cenocepacia (strain ATCC BAA-245 / DSM 16553 / LMG 16656 / NCTC 13227 / J2315 / CF5610) (Burkholderia cepacia (strain J2315)).